The chain runs to 306 residues: Protein STPG3 (306 aa).

Residues cysteine 210–asparagine 230 form a disordered region.

In Mus musculus (Mouse), this protein is Protein STPG3.